Reading from the N-terminus, the 341-residue chain is L-threonine 3-dehydrogenase (341 aa).

A Zn(2+)-binding site is contributed by Cys38. Residues Thr40 and His43 each act as charge relay system in the active site. Positions 63, 64, 93, 96, 99, and 107 each coordinate Zn(2+). NAD(+) is bound by residues Ile175, Asp195, Arg200, 262 to 264 (LGI), and 286 to 287 (IY).

The protein belongs to the zinc-containing alcohol dehydrogenase family. In terms of assembly, homotetramer. Zn(2+) is required as a cofactor.

The protein resides in the cytoplasm. It catalyses the reaction L-threonine + NAD(+) = (2S)-2-amino-3-oxobutanoate + NADH + H(+). The protein operates within amino-acid degradation; L-threonine degradation via oxydo-reductase pathway; glycine from L-threonine: step 1/2. Functionally, catalyzes the NAD(+)-dependent oxidation of L-threonine to 2-amino-3-ketobutyrate. The protein is L-threonine 3-dehydrogenase of Salmonella gallinarum (strain 287/91 / NCTC 13346).